The primary structure comprises 263 residues: Transmembrane protein 176B (263 aa).

The next 4 membrane-spanning stretches (helical) occupy residues 61–81 (LGVT…CLYF), 89–109 (AFGC…GTIV), 121–141 (VSCL…VLGV), and 197–217 (LFLA…VVSV). 3 positions are modified to phosphoserine: Ser231, Ser240, and Ser253. A disordered region spans residues 239 to 263 (ESERKLLDGHPAPASPAKEKIPAIL).

It belongs to the TMEM176 family. As to expression, ubiquitously expressed with higher expression in lung, liver, kidney and colon. Expressed in cerebellar granule cells.

It is found in the nucleus membrane. May play a role in the process of maturation of dendritic cells. Required for the development of cerebellar granule cells. This chain is Transmembrane protein 176B (Tmem176b), found in Mus musculus (Mouse).